The chain runs to 411 residues: Floricaula/leafy-like protein (411 aa).

The interval 220 to 259 (PDTNYGSEQTKACKKQKRRRSKDSGEDGEERQREHPFIVT) is disordered. A compositionally biased stretch (basic residues) spans 231–240 (ACKKQKRRRS). Basic and acidic residues predominate over residues 241–255 (KDSGEDGEERQREHP). 3 consecutive DNA-binding regions follow at residues 252-256 (REHPF), 321-328 (NKPKMRHY), and 392-395 (YVPT).

Belongs to the FLO/LFY family. In terms of tissue distribution, expressed in vegetative buds and male cones but not in female cones, vascular tissue, roots or secondary needles.

It is found in the nucleus. In terms of biological role, probable transcription factor. The polypeptide is Floricaula/leafy-like protein (FLL) (Pinus radiata (Monterey pine)).